The following is an 809-amino-acid chain: Probable replication endonuclease from prophage-like region (809 aa).

Residues Tyr503 and Tyr507 each act as O-(5'-phospho-DNA)-tyrosine intermediate in the active site.

This sequence belongs to the phage GPA family.

In terms of biological role, possible endonuclease which induces a single-strand cut and initiates DNA replication. The chain is Probable replication endonuclease from prophage-like region from Salmonella typhimurium (strain LT2 / SGSC1412 / ATCC 700720).